Here is a 194-residue protein sequence, read N- to C-terminus: MPKRRARVTRKTKETDIAIELVLDGNGKYEIQSGIRFLDHMLESFSKHSRIDIALTCTGDVDVDDHHSIEDIAIVLGSAISQALGDKRGIQRYGWAIIPMDESLARAAIDLSGRSYLFFDAVFDRPTVSDLSTEMVEHFFFSLAEHLKANIHLEILHGKNTHHKVEALFKSLAVAMREAVKITSNEVLSTKGVI.

Belongs to the imidazoleglycerol-phosphate dehydratase family.

Its subcellular location is the cytoplasm. It carries out the reaction D-erythro-1-(imidazol-4-yl)glycerol 3-phosphate = 3-(imidazol-4-yl)-2-oxopropyl phosphate + H2O. It participates in amino-acid biosynthesis; L-histidine biosynthesis; L-histidine from 5-phospho-alpha-D-ribose 1-diphosphate: step 6/9. The sequence is that of Imidazoleglycerol-phosphate dehydratase from Chloroherpeton thalassium (strain ATCC 35110 / GB-78).